A 372-amino-acid polypeptide reads, in one-letter code: Ephrin type-A receptor 8 (372 aa).

One can recognise a Protein kinase domain in the interval 2-263; it reads IHIEKIIGSG…HVVSVLEALV (262 aa). ATP-binding positions include 8-16 and Lys-34; that span reads IGSGESGEV. Asp-127 (proton acceptor) is an active-site residue. Tyr-206 bears the Phosphotyrosine; by autocatalysis mark. Residues 297-372 form the SAM domain; that stretch reads NGDLTVGDWL…SCTQGPRRHL (76 aa). Positions 370-372 match the PDZ-binding motif; that stretch reads RHL.

Heterotetramer upon binding of the ligand. The heterotetramer is composed of an ephrin dimer and a receptor dimer. Oligomerization is probably required to induce biological responses. May also form heterodimers with other ephrin receptors. Interacts with FYN; possible downstream effector of EPHA8 in regulation of cell adhesion. Interacts with PIK3CG; regulates integrin-mediated cell adhesion to substrate. Interacts with TIAM1; regulates clathrin-mediated endocytosis of EPHA8. Interacts with ANKS1A and ANKS1B; EPHA8 kinase activity-independent but stimulated by EPHA8 ubiquitination. Phosphorylated. Phosphorylation is stimulated upon binding of its ligands including EFNA2, EFNA3 and EFNA5. Autophosphorylation on Tyr-206 modulates tyrosine kinase activity. Post-translationally, ubiquitinated. Ubiquitination by CBL regulates the receptor stability and activity through proteasomal degradation. ANKS1A prevents ubiquitination and degradation. Most abundant in brain.

The protein resides in the cell membrane. It is found in the cell projection. The protein localises to the early endosome membrane. It catalyses the reaction L-tyrosyl-[protein] + ATP = O-phospho-L-tyrosyl-[protein] + ADP + H(+). Receptor tyrosine kinase which binds promiscuously GPI-anchored ephrin-A family ligands residing on adjacent cells, leading to contact-dependent bidirectional signaling into neighboring cells. The signaling pathway downstream of the receptor is referred to as forward signaling while the signaling pathway downstream of the ephrin ligand is referred to as reverse signaling. The GPI-anchored ephrin-A EFNA2, EFNA3, and EFNA5 are able to activate EPHA8 through phosphorylation. With EFNA5 may regulate integrin-mediated cell adhesion and migration on fibronectin substrate but also neurite outgrowth. During development of the nervous system also plays a role in axon guidance. Downstream effectors of the EPHA8 signaling pathway include FYN which promotes cell adhesion upon activation by EPHA8 and the MAP kinases in the stimulation of neurite outgrowth. The protein is Ephrin type-A receptor 8 (Epha8) of Rattus norvegicus (Rat).